A 76-amino-acid chain; its full sequence is ATP synthase subunit 9, mitochondrial (76 aa).

2 consecutive transmembrane segments (helical) span residues 13 to 35 (GISTIGLLGAGIGIAIVFAALIQ) and 50 to 72 (FAILGFAISEATGLFCLMISFLL).

This sequence belongs to the ATPase C chain family. In terms of assembly, F-type ATPases have 2 components, CF(1) - the catalytic core - and CF(0) - the membrane proton channel. In yeast, the dimeric form of ATP synthase consists of 18 polypeptides: alpha, beta, gamma, delta, epsilon, 4 (B), 5 (OSCP), 6 (A), 8, 9 (C), d, E (Tim11), f, g, h, i, j and k.

Its subcellular location is the mitochondrion membrane. Its function is as follows. Mitochondrial membrane ATP synthase (F(1)F(0) ATP synthase or Complex V) produces ATP from ADP in the presence of a proton gradient across the membrane which is generated by electron transport complexes of the respiratory chain. F-type ATPases consist of two structural domains, F(1) - containing the extramembraneous catalytic core and F(0) - containing the membrane proton channel, linked together by a central stalk and a peripheral stalk. During catalysis, ATP synthesis in the catalytic domain of F(1) is coupled via a rotary mechanism of the central stalk subunits to proton translocation. Part of the complex F(0) domain. A homomeric c-ring of probably 10 subunits is part of the complex rotary element. This chain is ATP synthase subunit 9, mitochondrial (ATP9), found in Eremothecium gossypii (strain ATCC 10895 / CBS 109.51 / FGSC 9923 / NRRL Y-1056) (Yeast).